Consider the following 198-residue polypeptide: Superoxide dismutase [Mn], mitochondrial (198 aa).

Position 26 (H26) interacts with Mn(2+). Y34 carries the post-translational modification 3'-nitrotyrosine. An N6-acetyllysine; alternate mark is found at K44 and K51. K44 and K51 each carry N6-succinyllysine; alternate. H74 serves as a coordination point for Mn(2+). K90 is modified (N6-acetyllysine). An N6-acetyllysine; alternate mark is found at K98 and K106. K98 and K106 each carry N6-succinyllysine; alternate. Mn(2+) is bound by residues D159 and H163. N6-acetyllysine is present on K178.

It belongs to the iron/manganese superoxide dismutase family. As to quaternary structure, homotetramer. It depends on Mn(2+) as a cofactor. In terms of processing, nitrated under oxidative stress. Nitration coupled with oxidation inhibits the catalytic activity. Acetylation at Lys-98 decreases enzymatic activity. Deacetylated by SIRT3 upon exposure to ionizing radiations or after long fasting. Post-translationally, polyubiquitinated; leading to proteasomal degradation. Deubiquitinated by USP36 which increases protein stability.

The protein localises to the mitochondrion matrix. It carries out the reaction 2 superoxide + 2 H(+) = H2O2 + O2. Functionally, destroys superoxide anion radicals which are normally produced within the cells and which are toxic to biological systems. This is Superoxide dismutase [Mn], mitochondrial (SOD2) from Hylobates lar (Lar gibbon).